Reading from the N-terminus, the 134-residue chain is Profilin-1 (134 aa).

A disulfide bond links Cys-13 and Cys-118. The Involved in PIP2 interaction motif lies at 84-100 (AVIRGKKGSGGITIKKT). Position 114 is a phosphothreonine (Thr-114).

It belongs to the profilin family. As to quaternary structure, occurs in many kinds of cells as a complex with monomeric actin in a 1:1 ratio. Phosphorylated by MAP kinases.

The protein resides in the cytoplasm. It is found in the cytoskeleton. Its function is as follows. Binds to actin and affects the structure of the cytoskeleton. At high concentrations, profilin prevents the polymerization of actin, whereas it enhances it at low concentrations. This Olea europaea (Common olive) protein is Profilin-1.